Here is a 310-residue protein sequence, read N- to C-terminus: Choline trimethylamine-lyase activating enzyme (310 aa).

The 288-residue stretch at 17–304 folds into the Radical SAM core domain; that stretch reads YDGPGVRTLV…EACIRKYDFP (288 aa). [4Fe-4S] cluster is bound by residues Cys-31, Cys-35, Cys-38, Cys-57, Cys-60, Cys-63, and Cys-99. Residue 37 to 39 coordinates S-adenosyl-L-methionine; it reads WCS. 4Fe-4S ferredoxin-type domains follow at residues 48-77 and 79-109; these read YQVL…ISAS and LRHG…VVGE. Residues Gly-139, 188–190, and His-264 each bind S-adenosyl-L-methionine; that span reads DVK.

Belongs to the organic radical-activating enzymes family. In terms of assembly, monomer. It depends on [4Fe-4S] cluster as a cofactor.

The catalysed reaction is glycyl-[protein] + reduced [flavodoxin] + S-adenosyl-L-methionine = glycin-2-yl radical-[protein] + semiquinone [flavodoxin] + 5'-deoxyadenosine + L-methionine + H(+). The protein operates within amine and polyamine metabolism; choline degradation. Its function is as follows. Catalyzes activation of the choline trimethylamine-lyase CutC under anaerobic conditions by generation of an organic free radical on a glycine residue, via a homolytic cleavage of S-adenosyl-L-methionine (SAM). Is involved in the anaerobic choline utilization pathway that allows D.alaskensis to grow on choline as a source of carbon and energy. The protein is Choline trimethylamine-lyase activating enzyme of Oleidesulfovibrio alaskensis (strain ATCC BAA-1058 / DSM 17464 / G20) (Desulfovibrio alaskensis).